The following is a 72-amino-acid chain: Cytochrome c oxidase subunit 2 (72 aa).

Over 1–14 (MAHPSQLGFQDAAS) the chain is Mitochondrial intermembrane. A helical transmembrane segment spans residues 15–45 (PVMEELLHFHDHALMIVFLISTLVLYIIVAM). Over 46 to 72 (VSTKLTNKHILDSQEVEIVWTILPAVI) the chain is Mitochondrial matrix.

It belongs to the cytochrome c oxidase subunit 2 family. As to quaternary structure, component of the cytochrome c oxidase (complex IV, CIV), a multisubunit enzyme composed of 14 subunits. The complex is composed of a catalytic core of 3 subunits MT-CO1, MT-CO2 and MT-CO3, encoded in the mitochondrial DNA, and 11 supernumerary subunits COX4I, COX5A, COX5B, COX6A, COX6B, COX6C, COX7A, COX7B, COX7C, COX8 and NDUFA4, which are encoded in the nuclear genome. The complex exists as a monomer or a dimer and forms supercomplexes (SCs) in the inner mitochondrial membrane with NADH-ubiquinone oxidoreductase (complex I, CI) and ubiquinol-cytochrome c oxidoreductase (cytochrome b-c1 complex, complex III, CIII), resulting in different assemblies (supercomplex SCI(1)III(2)IV(1) and megacomplex MCI(2)III(2)IV(2)). Found in a complex with TMEM177, COA6, COX18, COX20, SCO1 and SCO2. Interacts with TMEM177 in a COX20-dependent manner. Interacts with COX20. Interacts with COX16. The cofactor is Cu cation.

Its subcellular location is the mitochondrion inner membrane. It catalyses the reaction 4 Fe(II)-[cytochrome c] + O2 + 8 H(+)(in) = 4 Fe(III)-[cytochrome c] + 2 H2O + 4 H(+)(out). Its function is as follows. Component of the cytochrome c oxidase, the last enzyme in the mitochondrial electron transport chain which drives oxidative phosphorylation. The respiratory chain contains 3 multisubunit complexes succinate dehydrogenase (complex II, CII), ubiquinol-cytochrome c oxidoreductase (cytochrome b-c1 complex, complex III, CIII) and cytochrome c oxidase (complex IV, CIV), that cooperate to transfer electrons derived from NADH and succinate to molecular oxygen, creating an electrochemical gradient over the inner membrane that drives transmembrane transport and the ATP synthase. Cytochrome c oxidase is the component of the respiratory chain that catalyzes the reduction of oxygen to water. Electrons originating from reduced cytochrome c in the intermembrane space (IMS) are transferred via the dinuclear copper A center (CU(A)) of subunit 2 and heme A of subunit 1 to the active site in subunit 1, a binuclear center (BNC) formed by heme A3 and copper B (CU(B)). The BNC reduces molecular oxygen to 2 water molecules using 4 electrons from cytochrome c in the IMS and 4 protons from the mitochondrial matrix. The sequence is that of Cytochrome c oxidase subunit 2 (mt-co2) from Atractosteus spatula (Alligator gar).